A 1096-amino-acid polypeptide reads, in one-letter code: Pullulanase (1096 aa).

Positions 1 to 19 (MLRYTCHALFLGSLVLLSG) are cleaved as a signal peptide. Residue Cys-20 is the site of N-palmitoyl cysteine attachment. A lipid anchor (S-diacylglycerol cysteine) is attached at Cys-20. A compositionally biased stretch (low complexity) spans 24–34 (SSSSTSGSPGS). The interval 24-50 (SSSSTSGSPGSPGNPGNPGTPGTPDPQ) is disordered. Asp-694 (nucleophile) is an active-site residue. The active-site Proton donor is the Glu-723. A disordered region spans residues 1014 to 1044 (QAGRQSGQPCRRHRGGDQRRAGKPDAAGLRR).

Belongs to the glycosyl hydrolase 13 family. Homotrimer.

The protein localises to the cell membrane. The catalysed reaction is Hydrolysis of (1-&gt;6)-alpha-D-glucosidic linkages in pullulan, amylopectin and glycogen, and in the alpha- and beta-limit dextrins of amylopectin and glycogen.. The protein is Pullulanase (pulA) of Klebsiella aerogenes (Enterobacter aerogenes).